A 430-amino-acid polypeptide reads, in one-letter code: Adenylosuccinate synthetase (430 aa).

GTP is bound by residues 13 to 19 (GDEGKGK) and 41 to 43 (GHT). Residue D14 is the Proton acceptor of the active site. 2 residues coordinate Mg(2+): D14 and G41. IMP is bound by residues 14–17 (DEGK), 39–42 (NAGH), T130, R144, Q225, T240, and R304. H42 functions as the Proton donor in the catalytic mechanism. A substrate-binding site is contributed by 300–306 (ASTGRPR). GTP-binding positions include R306, 332 to 334 (KLD), and 414 to 416 (STG).

This sequence belongs to the adenylosuccinate synthetase family. As to quaternary structure, homodimer. Mg(2+) serves as cofactor.

The protein localises to the cytoplasm. The catalysed reaction is IMP + L-aspartate + GTP = N(6)-(1,2-dicarboxyethyl)-AMP + GDP + phosphate + 2 H(+). Its pathway is purine metabolism; AMP biosynthesis via de novo pathway; AMP from IMP: step 1/2. Plays an important role in the de novo pathway of purine nucleotide biosynthesis. Catalyzes the first committed step in the biosynthesis of AMP from IMP. This is Adenylosuccinate synthetase from Xanthomonas campestris pv. campestris (strain 8004).